Consider the following 253-residue polypeptide: Protein PET20, mitochondrial (253 aa).

A mitochondrion-targeting transit peptide spans 1 to 36 (MLKLARPFIPPLSRNNAISSGIVLTSRRFQSSFTFL). The tract at residues 44-93 (KNQMKSKRKKGSKKAAYHRQPPEHEHTAPLIKQNKTITKKEHSDVRGSHL) is disordered. The segment covering 47–60 (MKSKRKKGSKKAAY) has biased composition (basic residues). Residues 81 to 90 (TKKEHSDVRG) are compositionally biased toward basic and acidic residues.

It is found in the mitochondrion. Its function is as follows. Required for respiratory growth, stability of the mitochondrial genome and for proper assembly or maintenance of mitochondrial proteins. The polypeptide is Protein PET20, mitochondrial (PET20) (Saccharomyces cerevisiae (strain ATCC 204508 / S288c) (Baker's yeast)).